The primary structure comprises 468 residues: MVDTESQICPLSPFGDDDLESPLSEEFLQEMGSIQEISPSIGDDSSGTFAFAEYRCLGSGPGSDGSIITDTLSPASSPSSVSYTPIAGSADDSSSATLNIECRICGDKASGYHYGVHACEGCKGFFRRTIRLKLAYDKCDRSCKIQKKNRNKCQYCRFQKCLSDGMSHNAIRFGRMPRSEKAKLKAEILTCEHDLEDSEVADLKSLAKRIYEAYLKNFNMNKIKARIILAGKASNNPPFVIHDMETLCMAEKTLVAKLVANGIQNKEAEVRIFHCCQCTSVETVTELTEFAKSIPGFSNLNLNDQVTLLKYGVYEAIFAMLSSVMNKDGMLVAYGNGFITREFLKSLRKPFCDIMEPKFDFAMKFNALELDDSDISLFVAAIICCGDRPGLLNVGHIERMQESIVHVLQLHLQNNHPDDVFLFPKLLQKMADLRQLVTEHAQLVQVIKKTESDAALHPLLQEIYRDMY.

Residues 1-20 (MVDTESQICPLSPFGDDDLE) form a disordered region. Residues 99-173 (NIECRICGDK…DGMSHNAIRF (75 aa)) constitute a DNA-binding region (nuclear receptor). 2 NR C4-type zinc fingers span residues 102–122 (CRIC…CEGC) and 139–161 (CDRS…FQKC). The NR LBD domain maps to 239 to 466 (FVIHDMETLC…HPLLQEIYRD (228 aa)). The interval 304 to 433 (DQVTLLKYGV…PKLLQKMADL (130 aa)) is required for heterodimerization with RXRA.

The protein belongs to the nuclear hormone receptor family. NR1 subfamily. As to quaternary structure, heterodimer; with RXRA. This heterodimerization is required for DNA binding and transactivation activity. Interacts with NCOA3 coactivator. Interacts with CITED2; the interaction stimulates its transcriptional activity. Also interacts with PPARBP in vitro. Interacts with AKAP13, LPIN1, PRDM16 and coactivator NCOA6. Interacts with ASXL1 and ASXL2. Interacts with PER2. Interacts with SIRT1; the interaction seems to be modulated by NAD(+) levels. Interacts with CRY1 and CRY2. In hepatocytes, interacts with PAQR3 and HUWE1; the interactions promote PPARA poylubiquitination and HUWE1-mediated degradation. In terms of processing, ubiquitinated by E3 ubiquitin-protein ligase HUWE1; leading to proteasomal degradation. Post-translationally, phosphorylated.

It localises to the nucleus. Functionally, ligand-activated transcription factor. Key regulator of lipid metabolism. Activated by the endogenous ligand 1-palmitoyl-2-oleoyl-sn-glycerol-3-phosphocholine (16:0/18:1-GPC). Activated by oleylethanolamide, a naturally occurring lipid that regulates satiety. Receptor for peroxisome proliferators such as hypolipidemic drugs and fatty acids. Regulates the peroxisomal beta-oxidation pathway of fatty acids. Functions as a transcription activator for the ACOX1 and P450 genes. Transactivation activity requires heterodimerization with RXRA and is antagonized by NR2C2. May be required for the propagation of clock information to metabolic pathways regulated by PER2. This Phascolarctos cinereus (Koala) protein is Peroxisome proliferator-activated receptor alpha (PPARA).